The primary structure comprises 406 residues: Collagen and calcium-binding EGF domain-containing protein 1 (406 aa).

The signal sequence occupies residues 1 to 34; sequence MVPPPPSRGGAARGQLGRSLGPLLLLLALGHTWT. The region spanning 134 to 175 is the EGF-like; calcium-binding domain; it reads DIDECASSNGTLCAHICINTLGSYRCECREGYIREDDGKTCT. 3 disulfide bridges follow: cysteine 138-cysteine 150, cysteine 146-cysteine 159, and cysteine 161-cysteine 174. The N-linked (GlcNAc...) asparagine glycan is linked to asparagine 142. Asparagine 182 is a glycosylation site (N-linked (GlcNAc...) asparagine). Disordered stretches follow at residues 244–335 and 360–406; these read YLPG…PGSF and RTHS…DFYP. Collagen-like domains are found at residues 245–290 and 300–333; these read LPGP…PMGP and GRRG…GPPG. Positions 270 to 279 are enriched in pro residues; it reads PGMPGPPGQP. Residues 281–292 are compositionally biased toward low complexity; the sequence is PRGSMGPMGPSP. The O-linked (Xyl...) (chondroitin sulfate) serine glycan is linked to serine 385. Over residues 386–406 the composition is skewed to basic and acidic residues; it reads GDDHPRRTETRDLRAPRDFYP.

It belongs to the CCBE1 family. In terms of tissue distribution, detected in fibroblasts and urine (at protein level). Not expressed in blood or lymphatic endothelial cells.

The protein localises to the secreted. Its function is as follows. Required for lymphangioblast budding and angiogenic sprouting from venous endothelium during embryogenesis. The chain is Collagen and calcium-binding EGF domain-containing protein 1 (CCBE1) from Homo sapiens (Human).